We begin with the raw amino-acid sequence, 584 residues long: Poly(A) RNA polymerase protein 2 (584 aa).

Polar residues predominate over residues 1–11; the sequence is MGAKSVTASSS. Disordered stretches follow at residues 1-63 and 81-147; these read MGAK…LPKD and EGFD…QELE. Residues 12–35 show a composition bias toward basic residues; the sequence is KKIKNRHNGKVKKSKKIKKVRKPQ. A compositionally biased stretch (basic and acidic residues) spans 53-63; the sequence is NEQETNKLPKD. Residues 130–139 show a composition bias toward acidic residues; the sequence is SEDEQAEQEE. Aspartate 236 and aspartate 238 together coordinate Mg(2+). 4 residues coordinate ATP: glycine 301, lysine 326, asparagine 431, and arginine 435. Positions 371-431 constitute a PAP-associated domain; that stretch reads NLGVLLIEFF…AIQDPGDESN (61 aa). The interval 525-584 is disordered; the sequence is TSTATATTTDDDYEITNPPAKKAKIEEKPESEPAKRNSGETYITVSSEDDDEDGYNPYTL. The segment covering 547–562 has biased composition (basic and acidic residues); the sequence is AKIEEKPESEPAKRNS.

Belongs to the DNA polymerase type-B-like family. In terms of assembly, component of the TRAMP complex (also called TRF4 complex) composed of at least HUL4, MTR4, PAP2/TRF4 and either AIR1 or AIR2. Interacts with NOP53 and POL2. Interacts directly with AIR2. Mg(2+) is required as a cofactor. Mn(2+) serves as cofactor.

Its subcellular location is the nucleus. The catalysed reaction is RNA(n) + ATP = RNA(n)-3'-adenine ribonucleotide + diphosphate. In terms of biological role, catalytic subunit of the TRAMP complex which has a poly(A) RNA polymerase activity and is involved in a post-transcriptional quality control mechanism limiting inappropriate expression of genetic information. Polyadenylation is required for the degradative activity of the exosome on several of its nuclear RNA substrates like cryptic transcripts generated by RNA polymerase II and III, or hypomethylated pre-tRNAi-Met. Polyadenylates RNA processing and degradation intermediates of snRNAs, snoRNAs and mRNAs that accumulate in strains lacking a functional exosome. TRF4 is also required for proper nuclear division in mitosis, DNA damage repair and sister chromatid cohesion. Involved in the regulation of histone mRNA levels. May mediate mitotic chromosome condensation. The polypeptide is Poly(A) RNA polymerase protein 2 (PAP2) (Saccharomyces cerevisiae (strain ATCC 204508 / S288c) (Baker's yeast)).